Reading from the N-terminus, the 632-residue chain is Basic helix-loop-helix ARNT-like protein 1 (632 aa).

Positions 1 to 39 (MADQRMDISSTISDFMSPGPTDLLSGSLGTSGVDCNRKR) are disordered. At Ser-17 the chain carries Phosphoserine; by GSK3-beta. The residue at position 21 (Thr-21) is a Phosphothreonine; by GSK3-beta. Residues 36 to 41 (NRKRKG) carry the Nuclear localization signal motif. The bHLH domain maps to 79-132 (NAREAHSQIEKRRRDKMNSFIDELASLVPTCNAMSRKLDKLTVLRMAVQHMKTL). A Phosphoserine modification is found at Ser-85. Ser-97 is subject to Phosphoserine; by CK2. A Nuclear export signal 1 motif is present at residues 149-159 (LSDDELKHLIL). One can recognise a PAS 1 domain in the interval 150–222 (SDDELKHLIL…EQLSSSDTAP (73 aa)). Lys-259 is covalently cross-linked (Glycyl lysine isopeptide (Lys-Gly) (interchain with G-Cter in SUMO2 and SUMO3)). A Glycyl lysine isopeptide (Lys-Gly) (interchain with G-Cter in SUMO); alternate cross-link involves residue Lys-266. Lys-266 is covalently cross-linked (Glycyl lysine isopeptide (Lys-Gly) (interchain with G-Cter in SUMO2); alternate). Residues 333 to 403 (QPANGEIRVK…CHRQVLQTRE (71 aa)) enclose the PAS 2 domain. A Nuclear export signal 2 motif is present at residues 367 to 375 (LAYLPQELL). Residues 408–451 (NCYKFKIKDGSFITLRSRWFSFMNPWTKEVEYIVSTNTVVLANV) enclose the PAC domain. 2 disordered regions span residues 465 to 498 (PPHSMDSMLPSGEGGPKRTHPTVPGIPGGTRAGA) and 517 to 601 (GSSP…SPSN). Residues 514–594 (RIRGSSPSSC…IGIDMIDNDQ (81 aa)) form an interaction with CIART region. Low complexity predominate over residues 517-527 (GSSPSSCGSSP). An N6-acetyllysine modification is found at Lys-544.

Component of the circadian clock oscillator which includes the CRY1/2 proteins, CLOCK or NPAS2, BMAL1 or BMAL2, CSNK1D and/or CSNK1E, TIMELESS and the PER1/2/3 proteins. Forms a heterodimer with CLOCK. The CLOCK-BMAL1 heterodimer is required for E-box-dependent transactivation, for CLOCK nuclear translocation and degradation, and, for phosphorylation of both CLOCK and BMAL1. Part of a nuclear complex which also includes RACK1 and PRKCA; RACK1 and PRKCA are recruited to the complex in a circadian manner. Interacts with NPAS2. Interacts with EZH2. Interacts with SUMO3. Interacts with SIRT1. Interacts with AHR. Interacts with ID1, ID2 and ID3. Interacts with DDX4. Interacts with OGT. Interacts with EED and SUZ12. Interacts with MTA1. Interacts with CIART. Interacts with HSP90. Interacts with KAT2B and EP300. Interacts with BHLHE40/DEC1 and BHLHE41/DEC2. Interacts with RELB and the interaction is enhanced in the presence of CLOCK. Interacts with PER1, PER2, CRY1 and CRY2 and this interaction requires a translocation to the nucleus. Interaction of the CLOCK-BMAL1 heterodimer with PER or CRY inhibits transcription activation. Interaction of the CLOCK-BMAL1 with CRY1 is independent of DNA but with PER2 is off DNA. The CLOCK-BMAL1 heterodimer interacts with GSK3B. Interacts with KDM5A. Interacts with KMT2A; in a circadian manner. Interacts with UBE3A. Interacts with PRKCG. Interacts with MAGEL2. Interacts with NCOA2. Interacts with THRAP3. The CLOCK-BMAL1 heterodimer interacts with PASD1. Interacts with PASD1. Interacts with USP9X. Interacts with PIWIL2 (via PIWI domain). Interacts with HDAC3. Interacts with HNF4A. Ubiquitinated, leading to its proteasomal degradation. Deubiquitinated by USP9X. In terms of processing, O-glycosylated; contains O-GlcNAc. O-glycosylation by OGT prevents protein degradation by inhibiting ubiquitination. It also stabilizes the CLOCK-BMAL1 heterodimer thereby increasing CLOCK-BMAL1-mediated transcription of genes in the negative loop of the circadian clock such as PER1/2/3 and CRY1/2. Post-translationally, acetylated on Lys-544 by CLOCK during the repression phase of the circadian cycle. Acetylation facilitates recruitment of CRY1 protein and initiates the repression phase of the circadian cycle. Acetylated at Lys-544 by KAT5 during the activation phase of the cycle, leading to recruitment of the positive transcription elongation factor b (P-TEFb) and BRD4, followed by productive elongation of circadian transcripts. Deacetylated by SIRT1, which may result in decreased protein stability. Phosphorylated upon dimerization with CLOCK. Phosphorylation enhances the transcriptional activity, alters the subcellular localization and decreases the stability of the CLOCK-BMAL1 heterodimer by promoting its degradation. Phosphorylation shows circadian variations in the liver with a peak between CT10 to CT14. Phosphorylation at Ser-97 by CK2 is essential for its nuclear localization, its interaction with CLOCK and controls CLOCK nuclear entry. Dephosphorylation at Ser-85 is important for dimerization with CLOCK and transcriptional activity. In terms of processing, sumoylated on Lys-266 upon dimerization with CLOCK. Predominantly conjugated to poly-SUMO2/3 rather than SUMO1 and the level of these conjugates undergo rhythmic variation, peaking at CT9-CT12. Sumoylation localizes it exclusively to the PML body and promotes its ubiquitination in the PML body, ubiquitin-dependent proteasomal degradation and the transcriptional activity of the CLOCK-BMAL1 heterodimer. Post-translationally, undergoes lysosome-mediated degradation in a time-dependent manner in the liver. Expressed in liver and testis (at protein level). Expressed in the suprachiasmatic nucleus (SCN) in a circadian manner.

The protein localises to the nucleus. It is found in the cytoplasm. The protein resides in the PML body. The redox state of the cell can modulate the transcriptional activity of the CLOCK-BMAL1 and NPAS2-BMAL1 heterodimers; NADH and NADPH enhance the DNA-binding activity of the heterodimers. Transcriptional activator which forms a core component of the circadian clock. The circadian clock, an internal time-keeping system, regulates various physiological processes through the generation of approximately 24 hour circadian rhythms in gene expression, which are translated into rhythms in metabolism and behavior. It is derived from the Latin roots 'circa' (about) and 'diem' (day) and acts as an important regulator of a wide array of physiological functions including metabolism, sleep, body temperature, blood pressure, endocrine, immune, cardiovascular, and renal function. Consists of two major components: the central clock, residing in the suprachiasmatic nucleus (SCN) of the brain, and the peripheral clocks that are present in nearly every tissue and organ system. Both the central and peripheral clocks can be reset by environmental cues, also known as Zeitgebers (German for 'timegivers'). The predominant Zeitgeber for the central clock is light, which is sensed by retina and signals directly to the SCN. The central clock entrains the peripheral clocks through neuronal and hormonal signals, body temperature and feeding-related cues, aligning all clocks with the external light/dark cycle. Circadian rhythms allow an organism to achieve temporal homeostasis with its environment at the molecular level by regulating gene expression to create a peak of protein expression once every 24 hours to control when a particular physiological process is most active with respect to the solar day. Transcription and translation of core clock components (CLOCK, NPAS2, BMAL1, BMAL2, PER1, PER2, PER3, CRY1 and CRY2) plays a critical role in rhythm generation, whereas delays imposed by post-translational modifications (PTMs) are important for determining the period (tau) of the rhythms (tau refers to the period of a rhythm and is the length, in time, of one complete cycle). A diurnal rhythm is synchronized with the day/night cycle, while the ultradian and infradian rhythms have a period shorter and longer than 24 hours, respectively. Disruptions in the circadian rhythms contribute to the pathology of cardiovascular diseases, cancer, metabolic syndromes and aging. A transcription/translation feedback loop (TTFL) forms the core of the molecular circadian clock mechanism. Transcription factors, CLOCK or NPAS2 and BMAL1 or BMAL2, form the positive limb of the feedback loop, act in the form of a heterodimer and activate the transcription of core clock genes and clock-controlled genes (involved in key metabolic processes), harboring E-box elements (5'-CACGTG-3') within their promoters. The core clock genes: PER1/2/3 and CRY1/2 which are transcriptional repressors form the negative limb of the feedback loop and interact with the CLOCK|NPAS2-BMAL1|BMAL2 heterodimer inhibiting its activity and thereby negatively regulating their own expression. This heterodimer also activates nuclear receptors NR1D1/2 and RORA/B/G, which form a second feedback loop and which activate and repress BMAL1 transcription, respectively. BMAL1 positively regulates myogenesis and negatively regulates adipogenesis via the transcriptional control of the genes of the canonical Wnt signaling pathway. Plays a role in normal pancreatic beta-cell function; regulates glucose-stimulated insulin secretion via the regulation of antioxidant genes NFE2L2/NRF2 and its targets SESN2, PRDX3, CCLC and CCLM. Negatively regulates the mTORC1 signaling pathway; regulates the expression of MTOR and DEPTOR. Controls diurnal oscillations of Ly6C inflammatory monocytes; rhythmic recruitment of the PRC2 complex imparts diurnal variation to chemokine expression that is necessary to sustain Ly6C monocyte rhythms. Regulates the expression of HSD3B2, STAR, PTGS2, CYP11A1, CYP19A1 and LHCGR in the ovary and also the genes involved in hair growth. Plays an important role in adult hippocampal neurogenesis by regulating the timely entry of neural stem/progenitor cells (NSPCs) into the cell cycle and the number of cell divisions that take place prior to cell-cycle exit. Regulates the circadian expression of CIART and KLF11. The CLOCK-BMAL1 heterodimer regulates the circadian expression of SERPINE1/PAI1, VWF, B3, CCRN4L/NOC, NAMPT, DBP, MYOD1, PPARGC1A, PPARGC1B, SIRT1, GYS2, F7, NGFR, GNRHR, BHLHE40/DEC1, ATF4, MTA1, KLF10 and also genes implicated in glucose and lipid metabolism. Promotes rhythmic chromatin opening, regulating the DNA accessibility of other transcription factors. May play a role in spermatogenesis; contributes to the chromatoid body assembly and physiology. The NPAS2-BMAL1 heterodimer positively regulates the expression of MAOA, F7 and LDHA and modulates the circadian rhythm of daytime contrast sensitivity by regulating the rhythmic expression of adenylate cyclase type 1 (ADCY1) in the retina. The preferred binding motif for the CLOCK-BMAL1 heterodimer is 5'-CACGTGA-3', which contains a flanking adenine nucleotide at the 3-prime end of the canonical 6-nucleotide E-box sequence. CLOCK specifically binds to the half-site 5'-CAC-3', while BMAL1 binds to the half-site 5'-GTGA-3'. The CLOCK-BMAL1 heterodimer also recognizes the non-canonical E-box motifs 5'-AACGTGA-3' and 5'-CATGTGA-3'. Essential for the rhythmic interaction of CLOCK with ASS1 and plays a critical role in positively regulating CLOCK-mediated acetylation of ASS1. Plays a role in protecting against lethal sepsis by limiting the expression of immune checkpoint protein CD274 in macrophages in a PKM2-dependent manner. Regulates the diurnal rhythms of skeletal muscle metabolism via transcriptional activation of genes promoting triglyceride synthesis (DGAT2) and metabolic efficiency (COQ10B). This is Basic helix-loop-helix ARNT-like protein 1 (Bmal1) from Mus musculus (Mouse).